Consider the following 585-residue polypeptide: ATP-dependent lipid A-core flippase (585 aa).

Helical transmembrane passes span leucine 24–alanine 44, leucine 65–glycine 85, isoleucine 143–valine 163, tryptophan 165–valine 185, and proline 253–proline 273. One can recognise an ABC transmembrane type-1 domain in the interval alanine 29–arginine 310. Positions leucine 342–leucine 578 constitute an ABC transporter domain. Residue glycine 376–serine 383 coordinates ATP.

Belongs to the ABC transporter superfamily. Lipid exporter (TC 3.A.1.106) family. As to quaternary structure, homodimer.

The protein localises to the cell inner membrane. The catalysed reaction is ATP + H2O + lipid A-core oligosaccharideSide 1 = ADP + phosphate + lipid A-core oligosaccharideSide 2.. Functionally, involved in lipopolysaccharide (LPS) biosynthesis. Translocates lipid A-core from the inner to the outer leaflet of the inner membrane. Transmembrane domains (TMD) form a pore in the inner membrane and the ATP-binding domain (NBD) is responsible for energy generation. The sequence is that of ATP-dependent lipid A-core flippase from Hahella chejuensis (strain KCTC 2396).